Here is a 245-residue protein sequence, read N- to C-terminus: MIIPAIDLIDGNVVRLYQGDYGQQTTFDLSPLAQLQSYEARGAKWLHIVDLTGAKDPAKRQTRLISELVAGLNANIQVGGGIRTEEQVTELLAIGVKRVVIGSLAVKEPELVKQWFIKYGSEAICLALDVNINQSGEKMVAVSGWQSGGGKSLESLVETFSAVGLKHALVTDISRDGTLTGANTALYQEIAASFPNIAWQASGGIATLEDVAAVRDSGAAGIIIGKALLINQFNVAEAIQCWPND.

The Proton acceptor role is filled by Asp7. The active-site Proton donor is the Asp129.

Belongs to the HisA/HisF family.

The protein resides in the cytoplasm. It catalyses the reaction 1-(5-phospho-beta-D-ribosyl)-5-[(5-phospho-beta-D-ribosylamino)methylideneamino]imidazole-4-carboxamide = 5-[(5-phospho-1-deoxy-D-ribulos-1-ylimino)methylamino]-1-(5-phospho-beta-D-ribosyl)imidazole-4-carboxamide. Its pathway is amino-acid biosynthesis; L-histidine biosynthesis; L-histidine from 5-phospho-alpha-D-ribose 1-diphosphate: step 4/9. This chain is 1-(5-phosphoribosyl)-5-[(5-phosphoribosylamino)methylideneamino] imidazole-4-carboxamide isomerase, found in Shewanella sp. (strain W3-18-1).